Consider the following 457-residue polypeptide: UDP-glycosyltransferase 708C2 (457 aa).

Residue His32 is the Proton acceptor of the active site. Position 32 (His32) interacts with an anthocyanidin. Residue Asp129 is the Charge relay of the active site. Position 150 (Thr150) interacts with UDP-alpha-D-glucose. Residues 279-280 form a UDP region; that stretch reads NR. Residues Val341, Gln343, His358, Trp361, Asn362, Ser363, and Glu366 each coordinate UDP-alpha-D-glucose. Residue Gly381 participates in an anthocyanidin binding. UDP-alpha-D-glucose is bound by residues Asp382 and Gln383.

The protein belongs to the UDP-glycosyltransferase family. Expressed in cotyledons. Not detected in flowers, leaves, roots and hypocotyls.

The catalysed reaction is a 3'-hydro-2'-hydroxy-beta-oxodihydrochalcone + UDP-alpha-D-glucose = a 3'-(beta-D-glucopyranosyl)-2'-hydroxy-beta-oxodihydrochalcone + UDP + H(+). Functionally, UDP-glucose-dependent glucosyltransferase catalyzing the c-glucosylation of 2-hydroxyflavanones (2-hydroxynaringenin, 2-hydroxyeriodictyol and 2-hydroxypinocembrin) and phloretin. No activity with flavanones, flavones or flavonols. The sequence is that of UDP-glycosyltransferase 708C2 from Fagopyrum esculentum (Common buckwheat).